Consider the following 122-residue polypeptide: MIQPQTHLNVADNSGARELMCIQIIGASNRRYAHIGDIIVAVIKEAVPNMPLERSEVVRAVIVRTRKELKRDNGMIIRYDDNAAVVIDQEGNPKGTRIFGAIPRELRQFNFTKIVSLAPEVL.

This sequence belongs to the universal ribosomal protein uL14 family. As to quaternary structure, part of the 50S ribosomal subunit.

The protein localises to the plastid. Binds to 23S rRNA. The protein is Large ribosomal subunit protein uL14c of Cuscuta reflexa (Southern Asian dodder).